We begin with the raw amino-acid sequence, 354 residues long: Protein angel (354 aa).

Residues 22 to 59 (VSSQAKGASGKRKQKAKEMESSHDRNRRWTSLGNQAEG) are disordered.

The protein belongs to the CCR4/nocturin family. In terms of tissue distribution, ubiquitously expressed in embryos.

The polypeptide is Protein angel (angel) (Drosophila melanogaster (Fruit fly)).